A 203-amino-acid polypeptide reads, in one-letter code: MRLFVGLGNPGSRYAGNRHNIGFMALDAIARRHRAAPWRRKFQGEASEAVLGSERVLLLKPETYMNESGRAVAEAQRFYKIALDDVVVFHDELDLGPTKVRVKRGGGNAGHNGLRSITALCGNEYWRVRLGIGHPGDKALVHAYVLNDFAKAERPWVDDLCDALADHAALLAAGEDAAFQNKVHLALQGRGWDDVRRVGDKQA.

Tyr14 serves as a coordination point for tRNA. Catalysis depends on His19, which acts as the Proton acceptor. TRNA is bound by residues Tyr64, Asn66, and Asn112.

Belongs to the PTH family. In terms of assembly, monomer.

The protein resides in the cytoplasm. The catalysed reaction is an N-acyl-L-alpha-aminoacyl-tRNA + H2O = an N-acyl-L-amino acid + a tRNA + H(+). Its function is as follows. Hydrolyzes ribosome-free peptidyl-tRNAs (with 1 or more amino acids incorporated), which drop off the ribosome during protein synthesis, or as a result of ribosome stalling. Catalyzes the release of premature peptidyl moieties from peptidyl-tRNA molecules trapped in stalled 50S ribosomal subunits, and thus maintains levels of free tRNAs and 50S ribosomes. The sequence is that of Peptidyl-tRNA hydrolase from Methylobacterium nodulans (strain LMG 21967 / CNCM I-2342 / ORS 2060).